Consider the following 126-residue polypeptide: Putative esterase ComA2 (126 aa).

Belongs to the thioesterase PaaI family.

In terms of biological role, is not required for competence. The sequence is that of Putative esterase ComA2 (yuxO) from Bacillus subtilis (strain 168).